A 70-amino-acid chain; its full sequence is Alpha-conotoxin EIIB (70 aa).

The signal sequence occupies residues 1–21; the sequence is MGMRMMFIVFLLVVLATTVVS. A propeptide spanning residues 22–51 is cleaved from the precursor; that stretch reads FTLDHVLGLASEGRNAKAIDNALDQRDPKR. Q52 carries the pyrrolidone carboxylic acid modification. P54 carries the post-translational modification Hydroxyproline. 2 disulfide bridges follow: C56-C62 and C57-C67. C67 is modified (cysteine amide).

As to expression, expressed by the venom duct.

The protein resides in the secreted. Functionally, alpha-conotoxins bind to the nicotinic acetylcholine receptors (nAChR) and inhibit them. This peptide potently blocks muscular nicotinic acetylcholine receptor (CHRNA1-CHRNB1-CHRNG-CHRND), and has no effect on neuronal receptors. It is able to totally displace [125I]-Bgtx from the Torpedo receptor with an inhibition constant (Ki) of 2.2 and 0.7 nM. This is Alpha-conotoxin EIIB from Conus ermineus (Agate cone).